A 546-amino-acid polypeptide reads, in one-letter code: DNA ligase (546 aa).

Glu-244 provides a ligand contact to ATP. The active-site N6-AMP-lysine intermediate is Lys-246. Arg-251, Arg-266, Glu-295, Phe-334, Arg-405, and Lys-411 together coordinate ATP.

The protein belongs to the ATP-dependent DNA ligase family. It depends on Mg(2+) as a cofactor.

It carries out the reaction ATP + (deoxyribonucleotide)n-3'-hydroxyl + 5'-phospho-(deoxyribonucleotide)m = (deoxyribonucleotide)n+m + AMP + diphosphate.. In terms of biological role, DNA ligase that seals nicks in double-stranded DNA during DNA replication, DNA recombination and DNA repair. This is DNA ligase from Methanocorpusculum labreanum (strain ATCC 43576 / DSM 4855 / Z).